A 331-amino-acid polypeptide reads, in one-letter code: tRNA U34 carboxymethyltransferase (331 aa).

Carboxy-S-adenosyl-L-methionine is bound by residues K91, W105, K110, G130, 152 to 154, 181 to 182, M196, Y200, and R315; these read DPS and IE.

It belongs to the class I-like SAM-binding methyltransferase superfamily. CmoB family. Homotetramer.

The catalysed reaction is carboxy-S-adenosyl-L-methionine + 5-hydroxyuridine(34) in tRNA = 5-carboxymethoxyuridine(34) in tRNA + S-adenosyl-L-homocysteine + H(+). Functionally, catalyzes carboxymethyl transfer from carboxy-S-adenosyl-L-methionine (Cx-SAM) to 5-hydroxyuridine (ho5U) to form 5-carboxymethoxyuridine (cmo5U) at position 34 in tRNAs. The chain is tRNA U34 carboxymethyltransferase from Shewanella baltica (strain OS155 / ATCC BAA-1091).